The sequence spans 159 residues: uncharacterized protein (159 aa).

The segment covering 1 to 13 (MTQPTRPSVTCDQ) has biased composition (polar residues). The segment at 1–57 (MTQPTRPSVTCDQGSSTIGGTAAQATTSSSATSGSNYQRDRLGRRPEIGVGGQPQIC) is disordered. Positions 14–35 (GSSTIGGTAAQATTSSSATSGS) are enriched in low complexity. A compositionally biased stretch (basic and acidic residues) spans 38–47 (QRDRLGRRPE).

This is an uncharacterized protein from Homo sapiens (Human).